A 406-amino-acid chain; its full sequence is Tryptophan 2,3-dioxygenase (406 aa).

Position 19 is a phosphoserine (Ser-19). Residues 72–76 (FIITH) and Arg-144 contribute to the substrate site. Residue His-328 participates in heme binding. Thr-342 lines the substrate pocket.

This sequence belongs to the tryptophan 2,3-dioxygenase family. Homotetramer. Dimer of dimers. The cofactor is heme.

The enzyme catalyses L-tryptophan + O2 = N-formyl-L-kynurenine. Its pathway is amino-acid degradation; L-tryptophan degradation via kynurenine pathway; L-kynurenine from L-tryptophan: step 1/2. Heme-dependent dioxygenase that catalyzes the oxidative cleavage of the L-tryptophan (L-Trp) pyrrole ring and converts L-tryptophan to N-formyl-L-kynurenine. Catalyzes the oxidative cleavage of the indole moiety. This Bos taurus (Bovine) protein is Tryptophan 2,3-dioxygenase.